A 201-amino-acid chain; its full sequence is MPQAVAGPEIERLIQLLGRMPGLGPRSARRAALQLIKKRETLLAPLADAMRIAADRIVVCHACGNVDTSDPCTICRDETRDPTTLVVVEDVSDLWALERSGAVKARYHVLGGVLSALDGVRPEHLTIALLVERASAPGVKEIILALNATVDGQTTAHYVTESLKPLGLTITRLAHGVPVGGELDYLDEGTLTAAIRSRTAF.

The segment at 60–75 (CHACGNVDTSDPCTIC) adopts a C4-type zinc-finger fold. One can recognise a Toprim domain in the interval 83-178 (TTLVVVEDVS…TITRLAHGVP (96 aa)).

This sequence belongs to the RecR family.

Functionally, may play a role in DNA repair. It seems to be involved in an RecBC-independent recombinational process of DNA repair. It may act with RecF and RecO. This Methylorubrum populi (strain ATCC BAA-705 / NCIMB 13946 / BJ001) (Methylobacterium populi) protein is Recombination protein RecR.